Here is a 570-residue protein sequence, read N- to C-terminus: Formate--tetrahydrofolate ligase (570 aa).

Thr65–Thr72 serves as a coordination point for ATP.

Belongs to the formate--tetrahydrofolate ligase family.

It carries out the reaction (6S)-5,6,7,8-tetrahydrofolate + formate + ATP = (6R)-10-formyltetrahydrofolate + ADP + phosphate. Its pathway is one-carbon metabolism; tetrahydrofolate interconversion. This chain is Formate--tetrahydrofolate ligase, found in Shewanella halifaxensis (strain HAW-EB4).